The chain runs to 332 residues: Phospho-N-acetylmuramoyl-pentapeptide-transferase (332 aa).

10 consecutive transmembrane segments (helical) span residues 3–23 (FALMSGLVAFLATVLLIPRFI), 52–72 (MGGTVFLVVAILVSLLFATAF), 74–94 (LLTGGVLAILFILALYGVVGF), 115–135 (LALQILGGIVFYFVHVRGAGG), 140–160 (VFGHMVHLGVLYFPFVLFWLV), 172–192 (IDGLASISVVISLLAYSVIAF), 197–217 (FDILLVCVTMIGGLLGFFVYN), 223–243 (IFMGDVGSLALGGMLATISIA), 248–268 (WTLLLIGLVYVIETSSVMLQV), and 311–331 (VDFFLWSVGLIMSLITLAILY).

This sequence belongs to the glycosyltransferase 4 family. MraY subfamily. It depends on Mg(2+) as a cofactor.

Its subcellular location is the cell membrane. The catalysed reaction is UDP-N-acetyl-alpha-D-muramoyl-L-alanyl-gamma-D-glutamyl-L-lysyl-D-alanyl-D-alanine + di-trans,octa-cis-undecaprenyl phosphate = Mur2Ac(oyl-L-Ala-gamma-D-Glu-L-Lys-D-Ala-D-Ala)-di-trans,octa-cis-undecaprenyl diphosphate + UMP. It participates in cell wall biogenesis; peptidoglycan biosynthesis. Functionally, catalyzes the initial step of the lipid cycle reactions in the biosynthesis of the cell wall peptidoglycan: transfers peptidoglycan precursor phospho-MurNAc-pentapeptide from UDP-MurNAc-pentapeptide onto the lipid carrier undecaprenyl phosphate, yielding undecaprenyl-pyrophosphoryl-MurNAc-pentapeptide, known as lipid I. This is Phospho-N-acetylmuramoyl-pentapeptide-transferase from Streptococcus suis (strain 98HAH33).